The chain runs to 141 residues: Nucleoside diphosphate kinase (141 aa).

ATP contacts are provided by K11, F59, R87, T93, R104, and N114. Residue H117 is the Pros-phosphohistidine intermediate of the active site.

Belongs to the NDK family. In terms of assembly, homotetramer. Mg(2+) is required as a cofactor.

The protein localises to the cytoplasm. It catalyses the reaction a 2'-deoxyribonucleoside 5'-diphosphate + ATP = a 2'-deoxyribonucleoside 5'-triphosphate + ADP. It carries out the reaction a ribonucleoside 5'-diphosphate + ATP = a ribonucleoside 5'-triphosphate + ADP. Major role in the synthesis of nucleoside triphosphates other than ATP. The ATP gamma phosphate is transferred to the NDP beta phosphate via a ping-pong mechanism, using a phosphorylated active-site intermediate. This is Nucleoside diphosphate kinase from Chromobacterium violaceum (strain ATCC 12472 / DSM 30191 / JCM 1249 / CCUG 213 / NBRC 12614 / NCIMB 9131 / NCTC 9757 / MK).